The chain runs to 487 residues: Arginine ADP-riboxanase OspC3 (487 aa).

The segment covering 1–14 (MRVETHSPSFTNPN) has biased composition (polar residues). Positions 1-41 (MRVETHSPSFTNPNPAEACSGDPTEMGSRLSGVSRAPLPHA) are disordered. Residues H137, Q138, S139, S164, N167, and T168 each coordinate NAD(+). The active site involves E325. ANK repeat units follow at residues 368–398 (DAVT…EAKD) and 444–473 (RGDT…DRNL).

It belongs to the OspC family.

It localises to the secreted. The protein localises to the host cytoplasm. It carries out the reaction L-arginyl-[protein] + NAD(+) = ADP-riboxanated L-argininyl-[protein] + nicotinamide + NH4(+) + H(+). Functionally, ADP-riboxanase effector that inhibits host cell pyroptosis. Acts by mediating arginine ADP-riboxanation of host CASP4/CASP11, blocking CASP4/CASP11 autoprocessing. This prevents CASP4 activation and ability to recognize and cleave GSDMD, thereby inhibiting LPS-induced pyroptosis. ADP-riboxanation takes place in two steps: OspC3 first catalyzes ADP-ribosylation of target Arg, and then initiates a deamination to remove one N-omega group. The sequence is that of Arginine ADP-riboxanase OspC3 from Chromobacterium sp. (strain ATCC 53434 / SC 14030).